Consider the following 411-residue polypeptide: Putative ion-transport protein YfeO (411 aa).

Transmembrane regions (helical) follow at residues 9–29 (MLLLSLPALIIGVASSLVLIA), 54–74 (DSPFWIVGMLTLTGIVVGLII), 99–119 (ALPGLLLALIIGLAGGVSLGP), 149–169 (ILASAGTIGALFGTPVAAALI), 186–206 (LFAPLMAAAAGSLTTSLFFHP), 223–243 (IASGAIVAAIAIAAGMVAVWC), 258–278 (VLILGIGGFILGILGVIGGPL), 296–316 (LGAGDYFTLAVVKLAALVIAA), 322–342 (GGRIFPAVFIGAALGLMLHAH), 343–363 (VEAVPAAITVSCAILGLVLVV), and 386–406 (LLCIVMLPAWLLLAGKPLLAA).

Belongs to the chloride channel (TC 2.A.49) family.

Its subcellular location is the cell membrane. In Salmonella agona (strain SL483), this protein is Putative ion-transport protein YfeO.